Here is a 241-residue protein sequence, read N- to C-terminus: Ribose-5-phosphate isomerase A (241 aa).

Substrate-binding positions include 29–32 (TGTT), 84–87 (DGAD), and 97–100 (KGGG). The Proton acceptor role is filled by Glu106. Lys124 serves as a coordination point for substrate.

The protein belongs to the ribose 5-phosphate isomerase family. As to quaternary structure, homodimer.

The enzyme catalyses aldehydo-D-ribose 5-phosphate = D-ribulose 5-phosphate. It participates in carbohydrate degradation; pentose phosphate pathway; D-ribose 5-phosphate from D-ribulose 5-phosphate (non-oxidative stage): step 1/1. In terms of biological role, catalyzes the reversible conversion of ribose-5-phosphate to ribulose 5-phosphate. This is Ribose-5-phosphate isomerase A from Thermoplasma acidophilum (strain ATCC 25905 / DSM 1728 / JCM 9062 / NBRC 15155 / AMRC-C165).